Here is a 303-residue protein sequence, read N- to C-terminus: Caspase-7 (303 aa).

The tract at residues 1 to 27 (MADDQNCAPELEKADPSGEDGVDAKPD) is disordered. Residue A2 is modified to N-acetylalanine. The propeptide at 2 to 23 (ADDQNCAPELEKADPSGEDGVD) is N-terminally processed. Positions 10 to 27 (ELEKADPSGEDGVDAKPD) are enriched in basic and acidic residues. Phosphoserine is present on S30. Positions 38 to 41 (KKKK) are exosite. A loop L1 region spans residues 76-87 (KNFDKVTGMDVR). H144 is a catalytic residue. T173 carries the phosphothreonine modification. Residue C186 is part of the active site. Residues 187–196 (RGTELDDGVQ) are loop L2. Positions 199–206 (SGPINETD) are excised as a propeptide. A loop L3 region spans residues 226–238 (VPGYYSWRNPGKG). S239 is modified (phosphoserine). The loop L4 stretch occupies residues 274-288 (ESQCDDPCFNEKKQI).

It belongs to the peptidase C14A family. Heterotetramer that consists of two anti-parallel arranged heterodimers, each one formed by a 20 kDa (p20) and a 11 kDa (p11) subunit. Interacts with XIAP (via its second BIR domain); inhibiting CASP7 activity. Interacts with BIRC6/bruce. Interacts with ATXN3 (short isoform 1). Interacts with HSPA5. Post-translationally, cleavage by different proteases, such as granzyme B (GZMB), caspase-1 (CASP1), caspase-8 (CASP8) or caspase-9 (CASP9) generate the two active subunits. Its involvement in different programmed cell death processes is probably specified by the protease that activates CASP7. Cleaved and activated by initiator caspases (CASP8 and/or CASP9), leading to execution phase of apoptosis. Cleavage and maturation by GZMB regulates granzyme-mediated programmed cell death. Cleaved and activated by CASP1 in response to bacterial infection. Propeptide domains can also be cleaved efficiently by CASP3. Active heterodimers between the small subunit of caspase-7 and the large subunit of CASP3, and vice versa, also occur. Also cleaved at the N-terminus at alternative sites by CAPN1, leading to its activation. Phosphorylation at Ser-30 and Ser-239 by PAK2 inhibits its activity. Phosphorylation at Ser-30 prevents cleavage and activation by initiator caspase CASP9, while phosphorylation at Ser-239 prevents thiol protease activity by preventing substrate-binding. In terms of processing, ubiquitinated by BIRC6; this activity is inhibited by DIABLO/SMAC.

The protein localises to the cytoplasm. It localises to the cytosol. It is found in the nucleus. Its subcellular location is the secreted. The protein resides in the extracellular space. The catalysed reaction is Strict requirement for an Asp residue at position P1 and has a preferred cleavage sequence of Asp-Glu-Val-Asp-|-.. Its activity is regulated as follows. During activation, the N-terminal disordered prodomain is removed by cleavage. Concomitantly, double cleavage gives rise to a large Caspase-7 subunit p20 and a small Caspase-7 subunit p11. The two large and two small subunits then assemble to form the active CASP7 complex. Can be cleaved and activated by different caspases, depending on the context. Cleaved and activated by initiator caspases (CASP8 and/or CASP9), leading to execution phase of apoptosis. Cleavage and maturation by GZMB regulates granzyme-mediated programmed cell death. Cleavage and maturation by CASP1 regulates pyroptosis. Inhibited by XIAP, which directly binds to the active site pocket and obstructs substrate entry. Phosphorylation at Ser-30 and Ser-239 by PAK2 inhibits its activity. Inhibited by BIRC6; following inhibition of BIRC6-caspase binding by DIABLO/SMAC, BIRC6 is subjected to caspase cleavage, leading to an increase in active caspases. Its function is as follows. Thiol protease involved in different programmed cell death processes, such as apoptosis, pyroptosis or granzyme-mediated programmed cell death, by proteolytically cleaving target proteins. Has a marked preference for Asp-Glu-Val-Asp (DEVD) consensus sequences, with some plasticity for alternate non-canonical sequences. Its involvement in the different programmed cell death processes is probably determined by upstream proteases that activate CASP7. Acts as an effector caspase involved in the execution phase of apoptosis: following cleavage and activation by initiator caspases (CASP8 and/or CASP9), mediates execution of apoptosis by catalyzing cleavage of proteins, such as CLSPN, PARP1, PTGES3 and YY1. Compared to CASP3, acts as a minor executioner caspase and cleaves a limited set of target proteins. Acts as a key regulator of the inflammatory response in response to bacterial infection by catalyzing cleavage and activation of the sphingomyelin phosphodiesterase SMPD1 in the extracellular milieu, thereby promoting membrane repair. Regulates pyroptosis in intestinal epithelial cells: cleaved and activated by CASP1 in response to S.typhimurium infection, promoting its secretion to the extracellular milieu, where it catalyzes activation of SMPD1, generating ceramides that repair membranes and counteract the action of gasdermin-D (GSDMD) pores. Regulates granzyme-mediated programmed cell death in hepatocytes: cleaved and activated by granzyme B (GZMB) in response to bacterial infection, promoting its secretion to the extracellular milieu, where it catalyzes activation of SMPD1, generating ceramides that repair membranes and counteract the action of perforin (PRF1) pores. Following cleavage by CASP1 in response to inflammasome activation, catalyzes processing and inactivation of PARP1, alleviating the transcription repressor activity of PARP1. Acts as an inhibitor of type I interferon production during virus-induced apoptosis by mediating cleavage of antiviral proteins CGAS, IRF3 and MAVS, thereby preventing cytokine overproduction. Cleaves and activates sterol regulatory element binding proteins (SREBPs). Cleaves phospholipid scramblase proteins XKR4, XKR8 and XKR9. Cleaves BIRC6 following inhibition of BIRC6-caspase binding by DIABLO/SMAC. This chain is Caspase-7 (CASP7), found in Mesocricetus auratus (Golden hamster).